The following is a 277-amino-acid chain: Large ribosomal subunit protein uL2 (277 aa).

Disordered stretches follow at residues 37-60 (KNSTAGRNNNGHITTRHKGGGHKH) and 223-264 (VVMN…NKRT). The segment covering 39–49 (STAGRNNNGHI) has biased composition (polar residues). Residues 50–60 (TTRHKGGGHKH) are compositionally biased toward basic residues. A compositionally biased stretch (basic and acidic residues) spans 229-244 (DHPHGGGEGRTGEARE).

This sequence belongs to the universal ribosomal protein uL2 family. In terms of assembly, part of the 50S ribosomal subunit. Forms a bridge to the 30S subunit in the 70S ribosome.

One of the primary rRNA binding proteins. Required for association of the 30S and 50S subunits to form the 70S ribosome, for tRNA binding and peptide bond formation. It has been suggested to have peptidyltransferase activity; this is somewhat controversial. Makes several contacts with the 16S rRNA in the 70S ribosome. The protein is Large ribosomal subunit protein uL2 of Neisseria gonorrhoeae (strain ATCC 700825 / FA 1090).